The sequence spans 1508 residues: MSELKPIEIKEDAKPRDFEAFQLRLASPDRIKAWSHGEVKKPETINYRTLKPERDGLFCAKIFGPIRDYECLCGKYKKMRYKGIKCEKCGVEVTTSKVRRSRMGHIELVTPVAHIWYVNSLPSRIGTLLGIKMKDLERVLYYEAYIVENPGDAFYDNENSKKVDLYDVLNEEQYVLLEQKFSESGFKARMGGEVIRDLLASLDLVSILDQLKIEIESTNSEAKKKTIVKRLKVVESFLNSGNRPEWMMITNLPVLPPDLRPLVSLDGGKFAVSDVNDLYRRVINRNTRLKRLMELDAPEIIIRNEKRMLQEAVDALFDNGRRANAVKGANKRPLKSLSEIIKGKQGRFRQNLLGKRVDFSGRSVIVVGPKLRMDQCGLPKKMALELFKPHLLARLEEKGYATTVKQAKKMIEDKTNEVWECLEEVVADHPVMLNRAPTLHKMSIQAFHPVLIEGKAIQLHPLVCSAFNADFDGDQMAVHVPLSQEAIAECKILMLSSMNILLPASGKAVTVPSQDMVLGIYYLSLEKNEAVGANKIFASVDEVMIAVEAHYLDLHAKIKTMVEGRTVFTTAGRLIIKSILPNLKENSVPESMWNKVMKKKDIANLVDYVYKNGGLEVTAGFLDKLKNLGFRYATKAGISISIADIIIPESKYSYVDEAKKRVREIQNQYGSGLLTDSERYNKIVDIWTDTNNKVAAEMMKLIKTDKSGFNSIYMMADSGARGSAAQIRQLAGMRGLMAKPDGSIIETPITSNFREGLNVLEYFISTHGARKGLADTALKTANAGYLTRKLIDVAQNVKVTMDDCGTHEGVEITEITENGELIESLEERVLGRVLSDDVIDPITNEILFTEGTLIDEVKARTITDAGIKSVSIRTPITCKASKGVCSKCYGINLGEGKLVKPGEAVGIISAQSIGEPGTQLTLRTFHIGGTASTEQQDRQVVAQKEGFIRYYNLKTYENNNKFIVTNRRNAAILLVEPKIKAPFDGEINIEVAHEDINVIIKGKSDEVKYVLRKHDLAKPNELAGVSGKVEGKFYIPYIKGDKVKENESIVEVIKEGWNVPNRIPFASEVKVADGDPVTQDILSGANGVLKFYILKGDYLERIKNVKKGDMVSEKGLFVVIADDDDREAVRHYIPRNSVIKFNDSDIVSAKDTIAKPQDGSKLVIAEWDPYSTPVIAEEAGTVAYEDIEPGYSVAEQYDEATGESRLVINEYLPSGVKPTIVISTKSGKLIRYQLEPKTAIFVKDGAEVSRADTIAKTPKAVAKSKDITGGLPRVSELFEARRPKNTAIIAEIDGTIKFDKPLRSKERIIIMAEDGSSAEYLIDKSRQIQVRDGEFVHAGEKLTDGLVSSHDVLRILGEKALHYYLISEIQQVYRSQGVAISDKHIEIIVSQMLRQVKIVDSGHTNFIVGDMVSRRKFREENDRIMKIGGEPAIAEPVLLGVTRAAIGSDSVISAASFQETTKVLTEASIAAKFDYLEDLKENVILGRMIPVGTGLYQDKKVKIKINED.

Zn(2+) contacts are provided by cysteine 71, cysteine 73, cysteine 86, and cysteine 89. Aspartate 470, aspartate 472, and aspartate 474 together coordinate Mg(2+). Residues cysteine 804, cysteine 878, cysteine 885, and cysteine 888 each coordinate Zn(2+).

Belongs to the RNA polymerase beta' chain family. The RNAP catalytic core consists of 2 alpha, 1 beta, 1 beta' and 1 omega subunit. When a sigma factor is associated with the core the holoenzyme is formed, which can initiate transcription. The cofactor is Mg(2+). Zn(2+) serves as cofactor.

The catalysed reaction is RNA(n) + a ribonucleoside 5'-triphosphate = RNA(n+1) + diphosphate. DNA-dependent RNA polymerase catalyzes the transcription of DNA into RNA using the four ribonucleoside triphosphates as substrates. The sequence is that of DNA-directed RNA polymerase subunit beta' from Campylobacter fetus subsp. fetus (strain 82-40).